A 350-amino-acid polypeptide reads, in one-letter code: Peroxidase 10 (350 aa).

Positions 1–27 (MDHKMSMYLFVSYLAIFTLFFKGFVSS) are cleaved as a signal peptide. 4 disulfides stabilise this stretch: C57–C137, C90–C95, C143–C346, and C222–C256. Residue H88 is the Proton acceptor of the active site. Ca(2+)-binding residues include D89, V92, G94, D96, and S98. N102 carries N-linked (GlcNAc...) asparagine glycosylation. Residue P185 participates in substrate binding. A glycan (N-linked (GlcNAc...) asparagine) is linked at N193. Residue H215 coordinates heme b. T216 contributes to the Ca(2+) binding site. Ca(2+) contacts are provided by D270, S273, and D278.

It belongs to the peroxidase family. Classical plant (class III) peroxidase subfamily. The cofactor is heme b. Ca(2+) is required as a cofactor. In terms of tissue distribution, expressed in the whole plant, with the highest expression in roots.

The protein localises to the secreted. The enzyme catalyses 2 a phenolic donor + H2O2 = 2 a phenolic radical donor + 2 H2O. Its function is as follows. Removal of H(2)O(2), oxidation of toxic reductants, biosynthesis and degradation of lignin, suberization, auxin catabolism, response to environmental stresses such as wounding, pathogen attack and oxidative stress. These functions might be dependent on each isozyme/isoform in each plant tissue. The polypeptide is Peroxidase 10 (PER10) (Arabidopsis thaliana (Mouse-ear cress)).